Reading from the N-terminus, the 264-residue chain is 5'-nucleotidase SurE (264 aa).

Residues Asp-12, Asp-13, Ser-43, and Asn-98 each coordinate a divalent metal cation.

It belongs to the SurE nucleotidase family. The cofactor is a divalent metal cation.

Its subcellular location is the cytoplasm. The catalysed reaction is a ribonucleoside 5'-phosphate + H2O = a ribonucleoside + phosphate. Its function is as follows. Nucleotidase that shows phosphatase activity on nucleoside 5'-monophosphates. This is 5'-nucleotidase SurE from Sulfurovum sp. (strain NBC37-1).